A 955-amino-acid polypeptide reads, in one-letter code: 2-oxoglutarate dehydrogenase E1 component (955 aa).

The protein belongs to the alpha-ketoglutarate dehydrogenase family. In terms of assembly, homodimer. Part of the 2-oxoglutarate dehydrogenase (OGDH) complex composed of E1 (2-oxoglutarate dehydrogenase), E2 (dihydrolipoamide succinyltransferase) and E3 (dihydrolipoamide dehydrogenase); the complex contains multiple copies of the three enzymatic components (E1, E2 and E3). Thiamine diphosphate is required as a cofactor.

It catalyses the reaction N(6)-[(R)-lipoyl]-L-lysyl-[protein] + 2-oxoglutarate + H(+) = N(6)-[(R)-S(8)-succinyldihydrolipoyl]-L-lysyl-[protein] + CO2. In terms of biological role, E1 component of the 2-oxoglutarate dehydrogenase (OGDH) complex which catalyzes the decarboxylation of 2-oxoglutarate, the first step in the conversion of 2-oxoglutarate to succinyl-CoA and CO(2). The chain is 2-oxoglutarate dehydrogenase E1 component from Bacillus cereus (strain ATCC 10987 / NRS 248).